The following is a 214-amino-acid chain: Adenylate kinase (214 aa).

Residue Gly10–Thr15 coordinates ATP. An NMP region spans residues Ser30–Ile59. AMP is bound by residues Thr31, Arg36, Gln57–Ile59, Gly85–Arg88, and Gln92. The interval Gly122 to Asp159 is LID. Residues Arg123 and Val132 to Tyr133 contribute to the ATP site. AMP is bound by residues Arg156 and Arg167. Residue Gln200 participates in ATP binding.

It belongs to the adenylate kinase family. In terms of assembly, monomer.

The protein resides in the cytoplasm. The enzyme catalyses AMP + ATP = 2 ADP. It participates in purine metabolism; AMP biosynthesis via salvage pathway; AMP from ADP: step 1/1. Its function is as follows. Catalyzes the reversible transfer of the terminal phosphate group between ATP and AMP. Plays an important role in cellular energy homeostasis and in adenine nucleotide metabolism. The polypeptide is Adenylate kinase (Pseudoalteromonas translucida (strain TAC 125)).